Here is a 224-residue protein sequence, read N- to C-terminus: Beta-casein (224 aa).

Residues 1-15 (MKVLILACLVALALA) form the signal peptide. Residues Ser-30, Ser-32, Ser-33, and Ser-34 each carry the phosphoserine modification.

It belongs to the beta-casein family. Mammary gland specific. Secreted in milk.

The protein localises to the secreted. Its function is as follows. Important role in determination of the surface properties of the casein micelles. In Bubalus bubalis (Domestic water buffalo), this protein is Beta-casein (CSN2).